Here is a 608-residue protein sequence, read N- to C-terminus: Dolichyl-diphosphooligosaccharide--protein glycosyltransferase subunit 1 (608 aa).

A signal peptide spans 1–25; sequence MESPVALLLLLLLCLGALAPTPGSA. Residues 26–440 are Lumenal-facing; sequence SSEAPPLVNE…FNKVLMLQEP (415 aa). Lys-188 is modified (N6-acetyllysine). N-linked (GlcNAc...) asparagine glycosylation occurs at Asn-300. The chain crosses the membrane as a helical span at residues 441 to 458; it reads LLVVAAFYILFFTVIIYV. Topologically, residues 459 to 608 are cytoplasmic; that stretch reads RLDFSITKDP…TKIDHILDAL (150 aa). Residue Lys-539 is modified to N6-acetyllysine; alternate. A Glycyl lysine isopeptide (Lys-Gly) (interchain with G-Cter in SUMO2); alternate cross-link involves residue Lys-539.

The protein belongs to the OST1 family. Component of the oligosaccharyltransferase (OST) complex. OST exists in two different complex forms which contain common core subunits RPN1, RPN2, OST48, OST4, DAD1 and TMEM258, either STT3A or STT3B as catalytic subunits, and form-specific accessory subunits. STT3A complex assembly occurs through the formation of 3 subcomplexes. Subcomplex 1 contains RPN1 and TMEM258, subcomplex 2 contains the STT3A-specific subunits STT3A, DC2/OSTC, and KCP2 as well as the core subunit OST4, and subcomplex 3 contains RPN2, DAD1, and OST48. The STT3A complex can form stable complexes with the Sec61 complex or with both the Sec61 and TRAP complexes. Interacts with TMEM35A/NACHO. Post-translationally, ubiquitinated by the ECS(ASB11) complex. Ubiquitinated by RNF128, leading to degradation in a proteasome/lysosome-dependent manner. In terms of processing, ufmylated by UFL1 in response to endoplasmic reticulum stress, promoting reticulophagy of endoplasmic reticulum sheets.

The protein resides in the endoplasmic reticulum membrane. The protein operates within protein modification; protein glycosylation. In terms of biological role, subunit of the oligosaccharyl transferase (OST) complex that catalyzes the initial transfer of a defined glycan (Glc(3)Man(9)GlcNAc(2) in eukaryotes) from the lipid carrier dolichol-pyrophosphate to an asparagine residue within an Asn-X-Ser/Thr consensus motif in nascent polypeptide chains, the first step in protein N-glycosylation. N-glycosylation occurs cotranslationally and the complex associates with the Sec61 complex at the channel-forming translocon complex that mediates protein translocation across the endoplasmic reticulum (ER). All subunits are required for a maximal enzyme activity. In Mus musculus (Mouse), this protein is Dolichyl-diphosphooligosaccharide--protein glycosyltransferase subunit 1.